The chain runs to 490 residues: MAGGGGKSVAAALAMACFLLILAAFAPPAAAAPPDIMSIIRYNAEHGVRGLERTEAEARAAYDLWLARHRRGGGGGSRNGFIGEHERRFRVFWDNLKFVDAHNARADERGGFRLGMNRFADLTNGEFRATYLGTTPAGRGRRVGEAYRHDGVEALPDSVDWRDKGAVVAPVKNQGQCGSCWAFSAVAAVEGINKIVTGELVSLSEQELVECARNGQNSGCNGGIMDDAFAFIARNGGLDTEEDYPYTAMDGKCNLAKRSRKVVSIDGFEDVPENDELSLQKAVAHQPVSVAIDAGGREFQLYDSGVFTGRCGTNLDHGVVAVGYGTDAATGAAYWTVRNSWGPDWGENGYIRMERNVTARTGKCGIAMMASYPIKKGPNPKPSPPSPAPSPPQQCDRYSKCPAGTTCCCNYGIRNHCIVWGCCPVEGATCCKDHSTCCPKEYPVCNAKARTCSKSKNSPYNIRTPAAMARSVPEQPDSISFVVLNREDLV.

The N-terminal stretch at 1-31 (MAGGGGKSVAAALAMACFLLILAAFAPPAAA) is a signal peptide. The propeptide at 32–154 (APPDIMSIIR…EAYRHDGVEA (123 aa)) is activation peptide. 5 disulfide bridges follow: C177/C220, C211/C253, C311/C364, C395/C407, and C401/C422. C180 is a catalytic residue. Residues H317 and N339 contribute to the active site. N356 carries an N-linked (GlcNAc...) asparagine glycan. Positions 379 to 490 (NPKPSPPSPA…FVVLNREDLV (112 aa)) are cleaved as a propeptide — removed in mature form.

This sequence belongs to the peptidase C1 family. Highly expressed in the tapetum and developing pollen of the anther locules. Weakly expressed in root and germinating seed, hardly in the anther-less-flower and not detected in leaf.

In terms of biological role, cysteine protease that may play a role in pollen development. May be regulated by the transcription factor UDT1 in developing anthers and play a role in tapetum development. Positively regulated by the transcription factor TDR in developing anthers and may play a role in tapetum programmed cell death (PCD). The protein is Cysteine protease 1 (CP1) of Oryza sativa subsp. japonica (Rice).